A 250-amino-acid chain; its full sequence is Type III pantothenate kinase (250 aa).

6-13 (DVGNTNTV) serves as a coordination point for ATP. 103 to 106 (GADR) serves as a coordination point for substrate. Residue D105 is the Proton acceptor of the active site. A K(+)-binding site is contributed by D125. An ATP-binding site is contributed by T128. T180 contacts substrate.

The protein belongs to the type III pantothenate kinase family. Homodimer. It depends on NH4(+) as a cofactor. Requires K(+) as cofactor.

Its subcellular location is the cytoplasm. The catalysed reaction is (R)-pantothenate + ATP = (R)-4'-phosphopantothenate + ADP + H(+). The protein operates within cofactor biosynthesis; coenzyme A biosynthesis; CoA from (R)-pantothenate: step 1/5. Functionally, catalyzes the phosphorylation of pantothenate (Pan), the first step in CoA biosynthesis. This Frankia alni (strain DSM 45986 / CECT 9034 / ACN14a) protein is Type III pantothenate kinase.